A 100-amino-acid chain; its full sequence is Large ribosomal subunit protein uL23 (100 aa).

It belongs to the universal ribosomal protein uL23 family. As to quaternary structure, part of the 50S ribosomal subunit. Contacts protein L29, and trigger factor when it is bound to the ribosome.

Functionally, one of the early assembly proteins it binds 23S rRNA. One of the proteins that surrounds the polypeptide exit tunnel on the outside of the ribosome. Forms the main docking site for trigger factor binding to the ribosome. This chain is Large ribosomal subunit protein uL23, found in Lacticaseibacillus casei (strain BL23) (Lactobacillus casei).